Reading from the N-terminus, the 99-residue chain is Sarcosine oxidase subunit delta (99 aa).

Residues Cys6, Cys9, His59, and Cys63 each contribute to the Zn(2+) site.

It belongs to the SoxD family. In terms of assembly, heterotetramer composed of subunits alpha (SoxA), beta (SoxB), gamma (SoxG) and delta (SoxD).

The protein resides in the cytoplasm. It catalyses the reaction sarcosine + (6S)-5,6,7,8-tetrahydrofolate + O2 = (6R)-5,10-methylene-5,6,7,8-tetrahydrofolate + glycine + H2O2. The catalysed reaction is sarcosine + O2 + H2O = formaldehyde + glycine + H2O2. With respect to regulation, inhibited by Zn(2+), Cu(2+), Cd(2+), Hg(2+), Ag(+), p-chloromercuribenzoate (p-CMB), iodoacetamide, N-ethylmaleimide, CN(-), o-phenanthroline and sodium lauryl sulfate. Functionally, in the presence of tetrahydrofolate, catalyzes the oxidative demethylation of sarcosine to yield glycine, 5,10-methylenetetrahydrofolate and hydrogen peroxide. In the absence of tetrahydrofolate, catalyzes the oxidative demethylation of sarcosine to yield glycine, formaldehyde and hydrogen peroxide. Can also use N-methyl-L-alanine and N-ethyl-L-glycine. Is very specific for oxygen as an acceptor. The sequence is that of Sarcosine oxidase subunit delta from Corynebacterium sp. (strain U-96).